The sequence spans 300 residues: 3-hydroxy-3-isohexenylglutaryl-CoA/hydroxy-methylglutaryl-CoA lyase (300 aa).

Positions 7–274 (VRLVEVGPRD…HTGVDMHALV (268 aa)) constitute a Pyruvate carboxyltransferase domain. A substrate-binding site is contributed by Arg15. A divalent metal cation is bound by residues Asp16, His207, and His209. The active site involves Cys240. Residue Asn249 coordinates a divalent metal cation.

Belongs to the HMG-CoA lyase family. As to quaternary structure, homodimer. It depends on Mg(2+) as a cofactor. Mn(2+) is required as a cofactor.

The catalysed reaction is 3-hydroxy-3-(4-methylpent-3-en-1-yl)glutaryl-CoA = 7-methyl-3-oxooct-6-enoyl-CoA + acetate. It catalyses the reaction (3S)-3-hydroxy-3-methylglutaryl-CoA = acetoacetate + acetyl-CoA. It participates in metabolic intermediate metabolism; (S)-3-hydroxy-3-methylglutaryl-CoA degradation; acetoacetate from (S)-3-hydroxy-3-methylglutaryl-CoA: step 1/1. Functionally, involved in the L-leucine, isovalerate and acyclic monoterpene catabolism. Catalyzes the cleavage of 3-hydroxy-3-methylglutaryl-CoA (HMG-CoA) to yield acetyl-CoA and acetoacetate. It can also catalyze the cleavage of 3-hydroxy-3-isohexenylglutaryl-CoA (HIHG_CoA) to yield 7-methyl-3-oxooct-6-enoyl-CoA and acetate. The sequence is that of 3-hydroxy-3-isohexenylglutaryl-CoA/hydroxy-methylglutaryl-CoA lyase from Pseudomonas aeruginosa (strain ATCC 15692 / DSM 22644 / CIP 104116 / JCM 14847 / LMG 12228 / 1C / PRS 101 / PAO1).